The primary structure comprises 853 residues: DNA mismatch repair protein MutS (853 aa).

An ATP-binding site is contributed by 614 to 621; it reads GPNMGGKS.

This sequence belongs to the DNA mismatch repair MutS family.

Functionally, this protein is involved in the repair of mismatches in DNA. It is possible that it carries out the mismatch recognition step. This protein has a weak ATPase activity. In Cronobacter sakazakii (strain ATCC BAA-894) (Enterobacter sakazakii), this protein is DNA mismatch repair protein MutS.